Reading from the N-terminus, the 356-residue chain is S-adenosylmethionine:tRNA ribosyltransferase-isomerase (356 aa).

This sequence belongs to the QueA family. In terms of assembly, monomer.

The protein localises to the cytoplasm. The catalysed reaction is 7-aminomethyl-7-carbaguanosine(34) in tRNA + S-adenosyl-L-methionine = epoxyqueuosine(34) in tRNA + adenine + L-methionine + 2 H(+). It participates in tRNA modification; tRNA-queuosine biosynthesis. Functionally, transfers and isomerizes the ribose moiety from AdoMet to the 7-aminomethyl group of 7-deazaguanine (preQ1-tRNA) to give epoxyqueuosine (oQ-tRNA). In Shigella boydii serotype 4 (strain Sb227), this protein is S-adenosylmethionine:tRNA ribosyltransferase-isomerase.